The following is a 122-amino-acid chain: UPF0102 protein TTE1452 (122 aa).

The protein belongs to the UPF0102 family.

The chain is UPF0102 protein TTE1452 from Caldanaerobacter subterraneus subsp. tengcongensis (strain DSM 15242 / JCM 11007 / NBRC 100824 / MB4) (Thermoanaerobacter tengcongensis).